Reading from the N-terminus, the 257-residue chain is Type III pantothenate kinase (257 aa).

6-13 (DSGNTNTV) contributes to the ATP binding site. Residue 108–111 (GADR) coordinates substrate. Aspartate 110 serves as the catalytic Proton acceptor. Aspartate 130 contributes to the K(+) binding site. Residue threonine 133 participates in ATP binding. Threonine 185 provides a ligand contact to substrate.

The protein belongs to the type III pantothenate kinase family. As to quaternary structure, homodimer. NH4(+) is required as a cofactor. It depends on K(+) as a cofactor.

It localises to the cytoplasm. The enzyme catalyses (R)-pantothenate + ATP = (R)-4'-phosphopantothenate + ADP + H(+). The protein operates within cofactor biosynthesis; coenzyme A biosynthesis; CoA from (R)-pantothenate: step 1/5. Its function is as follows. Catalyzes the phosphorylation of pantothenate (Pan), the first step in CoA biosynthesis. This Rhodospirillum rubrum (strain ATCC 11170 / ATH 1.1.1 / DSM 467 / LMG 4362 / NCIMB 8255 / S1) protein is Type III pantothenate kinase.